Here is a 187-residue protein sequence, read N- to C-terminus: BCL2/adenovirus E1B 19 kDa protein-interacting protein 3 (187 aa).

A disordered region spans residues 42-86 (LDAQHESGRSSSKSSHCDSPPRSQTPQDTNRAEIDSHSFGEKNST). Phosphoserine is present on residues Ser-48, Ser-60, Ser-77, Ser-79, Ser-85, and Ser-88. The span at 50–63 (RSSSKSSHCDSPPR) shows a compositional bias: low complexity. The span at 71-81 (NRAEIDSHSFG) shows a compositional bias: basic and acidic residues. Residues 93-118 (IERRREVESILKKNSDWIWDWSSRPE) carry the BH3 motif. The chain crosses the membrane as a helical span at residues 157-177 (VFLPSLLLSHLLAIGLGIYIG).

It belongs to the NIP3 family. Homodimer. Binds to BCL2. Interacts with BNIP3L and ACAA2. Interacts (via BH3 domain) with SPATA18 (via coiled-coil domains). Interacts with BOK; promotes BOK oligomerization. Interacts with PPTC7; this interaction promotes BNIP3 degradation.

The protein localises to the mitochondrion. The protein resides in the mitochondrion outer membrane. Its function is as follows. Apoptosis-inducing protein that can overcome BCL2 suppression. May play a role in repartitioning calcium between the two major intracellular calcium stores in association with BCL2. Involved in mitochondrial quality control via its interaction with SPATA18/MIEAP: in response to mitochondrial damage, participates in mitochondrial protein catabolic process (also named MALM) leading to the degradation of damaged proteins inside mitochondria. The physical interaction of SPATA18/MIEAP, BNIP3 and BNIP3L/NIX at the mitochondrial outer membrane may play a critical role in the translocation of lysosomal proteins from the cytoplasm to the mitochondrial matrix. The physical interaction of SPATA18/MIEAP, BNIP3 and BNIP3L/NIX at the mitochondrial outer membrane regulates the opening of a pore in the mitochondrial double membrane in order to mediate the translocation of lysosomal proteins from the cytoplasm to the mitochondrial matrix. Plays an important role in the calprotectin (S100A8/A9)-induced cell death pathway. The protein is BCL2/adenovirus E1B 19 kDa protein-interacting protein 3 of Mus musculus (Mouse).